The primary structure comprises 172 residues: MISSDPEAVSASAYREAMAQLASAVHLVTTDGPGGRAGLTATSVCSVSDGPPTLLVCLNRNSSAYPAFLRNGVLCINTLTAAHEGLATDFAGRVPQAERFAGPDWGRLQTGAPVLAGALVAFDCRIVDRHEVGTHDVLICAVEALAEISGAESLLYAGRHYRVLPRPDSESD.

This sequence belongs to the non-flavoprotein flavin reductase family. RutF subfamily.

The enzyme catalyses FMNH2 + NAD(+) = FMN + NADH + 2 H(+). Catalyzes the reduction of FMN to FMNH2 which is used to reduce pyrimidine by RutA via the Rut pathway. This is FMN reductase (NADH) RutF 2 from Methylorubrum extorquens (strain PA1) (Methylobacterium extorquens).